The sequence spans 672 residues: Putative per-hexamer repeat protein 5 (672 aa).

7 stretches are compositionally biased toward gly residues: residues 141-161, 171-191, 215-233, 243-263, 273-295, 303-355, and 365-389; these read TGTG…GTGT, TDRG…GTGT, TGTG…GTDT, and TGTG…GSGS. Disordered regions lie at residues 141 to 193 and 213 to 672; these read TGTG…GTGT and TGTG…TGTA. A compositionally biased stretch (low complexity) spans 390–424; that stretch reads GTAKVTGTATTTATVTETGTAKVTGTDTGTAKVTG. Over residues 425–469 the composition is skewed to gly residues; the sequence is TGTGTGTGTGTGTGTGTGTGTGTGTGTGTGTGTGTGTGTGTGSGS. A compositionally biased stretch (low complexity) spans 470–486; that stretch reads GTAKVTGTDTGTAKVTG. Gly residues predominate over residues 487-537; the sequence is TGTGTGTGTGTGTGTGTGTGTGTGSGSGSGSGSGSGSGTGTGTGLGSGSGS. The span at 538–552 shows a compositional bias: low complexity; the sequence is GTAKVTGTGTAKVTG. The span at 553 to 617 shows a compositional bias: gly residues; sequence TGTGTGTGTG…GTGTGTGTGT (65 aa). The segment covering 618–636 has biased composition (low complexity); that stretch reads GTSTVTVRGTGTGTATATG. 2 stretches are compositionally biased toward gly residues: residues 637-653 and 663-672; these read TGTG…GTGT and RGTGTGTGTA.

The polypeptide is Putative per-hexamer repeat protein 5 (Phxr5) (Mus musculus (Mouse)).